Here is a 328-residue protein sequence, read N- to C-terminus: MIKPLTNHGNKNIYPDNSTLIVILGPTAVGKTSLSLQLARDINGEIISADSMQIYKDMDIGTAKASQKERNIIPHYMIDIIKPDQEFSVAEYQAMVDNLIPGIVYRNKVPILVGGTGLYIRAVIEGFLFPEMDKNIELRQKLQKEAQQYGNKYVYNKLKKIDPELAKKLHPNDLRRVIRGIEVYHQTGKTMTYFKKEKQKKGDRYRNLKIGLYREREELYKRINKRVDIMIEQGLIDEVKYLLTKYPDLSKTARQGLGYKEIIGYLKREYDREEAIRLLKRNTRRYAKRQLTWFRRDQDINWFNLSTGDYKKIYSEIKKLSRDFLLDF.

25 to 32 lines the ATP pocket; sequence GPTAVGKT. 27 to 32 serves as a coordination point for substrate; sequence TAVGKT. The segment at 50–53 is interaction with substrate tRNA; it reads DSMQ.

The protein belongs to the IPP transferase family. Monomer. Mg(2+) serves as cofactor.

It catalyses the reaction adenosine(37) in tRNA + dimethylallyl diphosphate = N(6)-dimethylallyladenosine(37) in tRNA + diphosphate. Its function is as follows. Catalyzes the transfer of a dimethylallyl group onto the adenine at position 37 in tRNAs that read codons beginning with uridine, leading to the formation of N6-(dimethylallyl)adenosine (i(6)A). The polypeptide is tRNA dimethylallyltransferase (Halothermothrix orenii (strain H 168 / OCM 544 / DSM 9562)).